We begin with the raw amino-acid sequence, 270 residues long: MHTVFYVSDGTAITAEVFGHAVLSQFPLAFEQITIPFVETLEKARQVRMRIDEQFRQTGVRPILFHTIVDHQVREEVLKAQASSHDFLNTFVSPLEHELGVKAEPRLHRTHGMENRKLYDDRIEAVNFALANDDGITTKEYDEADIILIGVSRCGKTPTSLYLALQFGIRAANYPFIEQDMGVLDLPAALKANRHKLFGLTIAPQRLHEIRNQRRANSRYSSLEQCEQELACVERLFRQEAIRFLDTSSHSVEEISAKILEATGLRRQLY.

An ADP-binding site is contributed by 150-157 (GVSRCGKT).

This sequence belongs to the pyruvate, phosphate/water dikinase regulatory protein family. PSRP subfamily.

The catalysed reaction is [pyruvate, water dikinase] + ADP = [pyruvate, water dikinase]-phosphate + AMP + H(+). The enzyme catalyses [pyruvate, water dikinase]-phosphate + phosphate + H(+) = [pyruvate, water dikinase] + diphosphate. Functionally, bifunctional serine/threonine kinase and phosphorylase involved in the regulation of the phosphoenolpyruvate synthase (PEPS) by catalyzing its phosphorylation/dephosphorylation. The protein is Putative phosphoenolpyruvate synthase regulatory protein of Aeromonas hydrophila subsp. hydrophila (strain ATCC 7966 / DSM 30187 / BCRC 13018 / CCUG 14551 / JCM 1027 / KCTC 2358 / NCIMB 9240 / NCTC 8049).